A 330-amino-acid chain; its full sequence is Phenylalanine--tRNA ligase alpha subunit (330 aa).

Glu246 is a Mg(2+) binding site.

The protein belongs to the class-II aminoacyl-tRNA synthetase family. Phe-tRNA synthetase alpha subunit type 1 subfamily. In terms of assembly, tetramer of two alpha and two beta subunits. Mg(2+) serves as cofactor.

Its subcellular location is the cytoplasm. The catalysed reaction is tRNA(Phe) + L-phenylalanine + ATP = L-phenylalanyl-tRNA(Phe) + AMP + diphosphate + H(+). In Sulfurovum sp. (strain NBC37-1), this protein is Phenylalanine--tRNA ligase alpha subunit.